The sequence spans 312 residues: Polyamine aminopropyltransferase (312 aa).

The PABS domain occupies 7 to 247 (FFWAQEYFTP…GPLGFALAAQ (241 aa)). Glutamine 36 is an S-methyl-5'-thioadenosine binding site. Spermidine is bound by residues histidine 67 and glutamate 95. S-methyl-5'-thioadenosine-binding positions include aspartate 115 and 147 to 148 (DA). Aspartate 165 functions as the Proton acceptor in the catalytic mechanism. Proline 174 contacts S-methyl-5'-thioadenosine.

This sequence belongs to the spermidine/spermine synthase family. Homodimer or homotetramer.

It is found in the cytoplasm. It catalyses the reaction S-adenosyl 3-(methylsulfanyl)propylamine + putrescine = S-methyl-5'-thioadenosine + spermidine + H(+). It participates in amine and polyamine biosynthesis; spermidine biosynthesis; spermidine from putrescine: step 1/1. Functionally, catalyzes the irreversible transfer of a propylamine group from the amino donor S-adenosylmethioninamine (decarboxy-AdoMet) to putrescine (1,4-diaminobutane) to yield spermidine. The sequence is that of Polyamine aminopropyltransferase from Synechococcus sp. (strain JA-3-3Ab) (Cyanobacteria bacterium Yellowstone A-Prime).